A 203-amino-acid chain; its full sequence is MNPEYDYLFKLLLIGDSGVGKSCLLLRFADDTYTESYISTIGVDFKIRTVELDGKVIKLQIWDTAGQERFRTITSSYYRGAHGIIVVYDVTDQESFNNVKQWLNEIDRYASENVNKLLVGNKSDLTSKKVVEYSVAKAFADEIGIPFLETSAKNATNVEQAFMTMAAEIKNRMASQPIPTKAGGPVVRPQEGKPINSKSSSCC.

Residues 15-23, 33-40, 63-67, 121-124, and 151-153 each bind GTP; these read GDSGVGKSC, YTESYIST, DTAGQ, NKSD, and SAK. Positions 37 to 45 match the Effector region motif; that stretch reads YISTIGVDF. The interval 174 to 203 is disordered; that stretch reads ASQPIPTKAGGPVVRPQEGKPINSKSSSCC. 2 S-geranylgeranyl cysteine lipidation sites follow: Cys202 and Cys203.

This sequence belongs to the small GTPase superfamily. Rab family.

The protein localises to the cell membrane. In terms of biological role, protein transport. Probably involved in vesicular traffic. In Chlamydomonas reinhardtii (Chlamydomonas smithii), this protein is GTP-binding protein YPTC1 (YPTC1).